A 201-amino-acid chain; its full sequence is 3-isopropylmalate dehydratase small subunit (201 aa).

The protein belongs to the LeuD family. LeuD type 1 subfamily. Heterodimer of LeuC and LeuD.

It carries out the reaction (2R,3S)-3-isopropylmalate = (2S)-2-isopropylmalate. It participates in amino-acid biosynthesis; L-leucine biosynthesis; L-leucine from 3-methyl-2-oxobutanoate: step 2/4. Its function is as follows. Catalyzes the isomerization between 2-isopropylmalate and 3-isopropylmalate, via the formation of 2-isopropylmaleate. This chain is 3-isopropylmalate dehydratase small subunit, found in Jannaschia sp. (strain CCS1).